Consider the following 116-residue polypeptide: MYEQAIVIRNDLKMGKGKMAAQACHASIQAFLHAQKISSSAVSGWMNEGQKKVVLKVNSEKELLEIFKNVNIEGLPCSLIRDAGRTQVEPGSLTAVGIGPEKEEKISKVTKDLKLL.

Belongs to the PTH2 family.

It localises to the cytoplasm. The enzyme catalyses an N-acyl-L-alpha-aminoacyl-tRNA + H2O = an N-acyl-L-amino acid + a tRNA + H(+). Functionally, the natural substrate for this enzyme may be peptidyl-tRNAs which drop off the ribosome during protein synthesis. The protein is Peptidyl-tRNA hydrolase of Methanococcus maripaludis (strain C7 / ATCC BAA-1331).